The sequence spans 115 residues: Beta-2-microglobulin (115 aa).

A signal peptide spans 1-16 (MKIALVLLSLLALTLA). One can recognise an Ig-like C1-type domain in the interval 22–113 (PPVVKVYTAE…GNPSKKYRLD (92 aa)).

This sequence belongs to the beta-2-microglobulin family. Heterodimer of an alpha chain and a beta chain. Beta-2-microglobulin is the beta-chain of major histocompatibility complex class I molecules.

It localises to the secreted. Its function is as follows. Component of the class I major histocompatibility complex (MHC). Involved in the presentation of peptide antigens to the immune system. The chain is Beta-2-microglobulin (b2m) from Xenopus laevis (African clawed frog).